The sequence spans 353 residues: Protein disulfide isomerase CRELD2 (353 aa).

Positions 1–24 (MRLPRRAALGLLPLLLLLPPAPEA) are cleaved as a signal peptide. A CXXC motif is present at residues 31–34 (CHRC). Cystine bridges form between C31-C34, C140-C154, C148-C166, and C168-C177. The EGF-like 1 domain occupies 136 to 178 (DCLACQGGSQRPCSGNGHCSGDGSRQGDGSCRCHMGYQGPLCT). Residues 193-240 (HSICTACDESCKTCSGLTNRDCGECEVGWVLDEGACVDVDECAAEPPP) form an FU 1 repeat. N-linked (GlcNAc...) asparagine glycosylation occurs at N251. One copy of the FU 2 repeat lies at 253–302 (SYTCEECDSSCVGCTGEGPGNCKECISGYAREHGQCADVDECSLAEKTCV). Positions 263–266 (CVGC) match the CXXC motif. 4 cysteine pairs are disulfide-bonded: C263–C266, C294–C308, C301–C317, and C319–C330. Residues 290 to 331 (DVDECSLAEKTCVRKNENCYNTPGSYVCVCPDGFEETEDACV) enclose the EGF-like 2; calcium-binding domain. The disordered stretch occupies residues 332–353 (PPAEAEATEGESPTQLPSREDL). A compositionally biased stretch (polar residues) spans 342–353 (ESPTQLPSREDL).

The protein belongs to the CRELD family. Interacts with CHRNA4. Component of a complex containing at least CRELD2, MANF, MATN3 and PDIA4. In terms of tissue distribution, ubiquitously expressed. Highly expressed in skeletal muscle, heart, liver, kidney and placenta.

The protein localises to the endoplasmic reticulum. The catalysed reaction is Catalyzes the rearrangement of -S-S- bonds in proteins.. Functionally, protein disulfide isomerase. Might play a role in the unfolded protein response. May regulate transport of alpha4-beta2 neuronal acetylcholine receptor. The sequence is that of Protein disulfide isomerase CRELD2 (CRELD2) from Homo sapiens (Human).